Here is a 439-residue protein sequence, read N- to C-terminus: MKSVATSSLDDVDKDSVPLGSSINGTAQAETPLENVIDVESVRSHFPVLGGETAAFNNASGTVVLKEAIESTSNFMYSFPFPPGVDAKSMEAITAYTGNKGKVAAFINALPDEITFGQSTTCLFRLLGLSLKPMLNNDCEIVCSTLCHEAAASAWIHLSRELGITIKWWSPTTTPNSPDDPVLTTDSLKPLLSPKTRLVTCNHVSNVVGTIHPIREIADVVHTIPGCMLIVDGVACVPHRPVDVKELDVDFYCFSWYKLFGPHLGTLYASRKAQDRYMTSINHYFVSSSSLDGKLALGMPSFELQLMCSPIVSYLQDTVGWDRIVRQETVLVTILLEYLLSKPSVYRVFGRRNSDPSQRVAIVTFEVVGRSSGDVAMRVNTRNRFRITSGICLAPRPTWDVLKPKSSDGLVRVSFVHYNTVEEVRAFCSELDEIVTRDT.

The segment at 1–25 is disordered; it reads MKSVATSSLDDVDKDSVPLGSSING. Residues 120–121, Asn206, and 255–257 contribute to the pyridoxal 5'-phosphate site; these read TT and SWY. Lys258 carries the N6-(pyridoxal phosphate)lysine modification.

This sequence belongs to the class-V pyridoxal-phosphate-dependent aminotransferase family. The cofactor is pyridoxal 5'-phosphate.

It participates in mycotoxin biosynthesis. Its function is as follows. Cysteine desulfurase-like protein; part of the gene cluster that mediates the biosynthesis of the secondary metabolite ustiloxin B, an antimitotic tetrapeptide. First, ustA is processed by the subtilisin-like endoprotease Kex2 that is outside the ustiloxin B gene cluster, at the C-terminal side of Arg-Lys, after transfer to Golgi apparatus through the endoplasmic reticulum (ER). Cleavage by KEX2 generates 16 peptides YAIG-I to YAIG-XVI. To process the precursor peptide further, at least two peptidases are necessary to cleave the N-terminal and C-terminal sides of the Tyr-Ala-Ile-Gly core peptide which serves as backbone for the synthesis of ustiloxin B, through cyclization and modification of the tyrosine with a non-protein coding amino acid, norvaline. One of the two peptidases must be the serine peptidase ustP; and the other pepdidase is probably ustH. Macrocyclization of the core peptide derived from ustA requires the tyrosinase ustQ, as well as the homologous oxidases ustYa and ustYb, and leads to the production of the first cyclization product N-desmethylustiloxin F. For the formation of N-desmethylustiloxin F, three oxidation steps are required, hydroxylation at the benzylic position, hydroxylation at either the aromatic ring of Tyr or beta-position of Ile, and oxidative cyclization. UstQ may catalyze the oxidation of a phenol moiety, whereas the ustYa and ustYb are most likely responsible for the remaining two-step oxidations. N-desmethylustiloxin F is then methylated by ustM to yield ustiloxin F which in turn substrate of the cytochrome P450 monooxygenase ustC which catalyzes the formation of S-deoxyustiloxin H. The flavoprotein monooxygenases ustF1 and ustF2 then participate in the modification of the side chain of S-deoxyustiloxin H, leading to the synthesis of an oxime intermediate, via ustiloxin H. Finally, carboxylative dehydration performed by the cysteine desulfurase-like protein ustD yields ustiloxin B. The sequence is that of Cysteine desulfurase-like protein ustD from Aspergillus flavus (strain ATCC 200026 / FGSC A1120 / IAM 13836 / NRRL 3357 / JCM 12722 / SRRC 167).